Reading from the N-terminus, the 148-residue chain is Antitoxin Xre (148 aa).

Belongs to the MbcA/ParS/Xre antitoxin family. Homodimer. Forms a complex with cognate toxin Rse.

Antitoxin component of a type II toxin-antitoxin (TA) system. Neutralizes the NAD(+) depleting activity of cognate toxin Res. The sequence is that of Antitoxin Xre from Photorhabdus laumondii subsp. laumondii (strain DSM 15139 / CIP 105565 / TT01) (Photorhabdus luminescens subsp. laumondii).